Reading from the N-terminus, the 93-residue chain is DNA-directed RNA polymerase subunit Rpo11 (93 aa).

Belongs to the archaeal Rpo11/eukaryotic RPB11/RPC19 RNA polymerase subunit family. As to quaternary structure, part of the RNA polymerase complex.

It localises to the cytoplasm. The catalysed reaction is RNA(n) + a ribonucleoside 5'-triphosphate = RNA(n+1) + diphosphate. In terms of biological role, DNA-dependent RNA polymerase (RNAP) catalyzes the transcription of DNA into RNA using the four ribonucleoside triphosphates as substrates. The protein is DNA-directed RNA polymerase subunit Rpo11 of Methanocella arvoryzae (strain DSM 22066 / NBRC 105507 / MRE50).